We begin with the raw amino-acid sequence, 590 residues long: Bacillolysin (590 aa).

A signal peptide spans 1–24 (MKKVWFSLLGGAMLLGSVASGASA). The propeptide at 25-286 (ESSVSGPAQL…GSIVFQYDII (262 aa)) is activation peptide. The Ca(2+) site is built by Asp339, Asp341, and Asp419. Residue His423 participates in Zn(2+) binding. The active site involves Glu424. Positions 427 and 447 each coordinate Zn(2+). Ca(2+)-binding residues include Asp466, Tyr469, Thr470, Ile473, and Asp476. The active-site Proton donor is the His507.

The protein belongs to the peptidase M4 family. The cofactor is Ca(2+). Requires Zn(2+) as cofactor.

It localises to the secreted. The catalysed reaction is Similar, but not identical, to that of thermolysin.. Involved in the generation of beta- and alpha-amylases from the large amylase precursor. The chain is Bacillolysin (npr) from Paenibacillus polymyxa (Bacillus polymyxa).